Reading from the N-terminus, the 264-residue chain is Thymidylate synthase (264 aa).

Arginine 21 is a dUMP binding site. Position 51 (histidine 51) interacts with (6R)-5,10-methylene-5,6,7,8-tetrahydrofolate. Position 126–127 (126–127 (RR)) interacts with dUMP. Cysteine 146 serves as the catalytic Nucleophile. DUMP contacts are provided by residues 166-169 (RSAD), asparagine 177, and 207-209 (HIY). Aspartate 169 provides a ligand contact to (6R)-5,10-methylene-5,6,7,8-tetrahydrofolate. Alanine 263 serves as a coordination point for (6R)-5,10-methylene-5,6,7,8-tetrahydrofolate.

The protein belongs to the thymidylate synthase family. Bacterial-type ThyA subfamily. As to quaternary structure, homodimer.

It localises to the cytoplasm. It catalyses the reaction dUMP + (6R)-5,10-methylene-5,6,7,8-tetrahydrofolate = 7,8-dihydrofolate + dTMP. The protein operates within pyrimidine metabolism; dTTP biosynthesis. Functionally, catalyzes the reductive methylation of 2'-deoxyuridine-5'-monophosphate (dUMP) to 2'-deoxythymidine-5'-monophosphate (dTMP) while utilizing 5,10-methylenetetrahydrofolate (mTHF) as the methyl donor and reductant in the reaction, yielding dihydrofolate (DHF) as a by-product. This enzymatic reaction provides an intracellular de novo source of dTMP, an essential precursor for DNA biosynthesis. The polypeptide is Thymidylate synthase (Bacteroides fragilis (strain ATCC 25285 / DSM 2151 / CCUG 4856 / JCM 11019 / LMG 10263 / NCTC 9343 / Onslow / VPI 2553 / EN-2)).